Reading from the N-terminus, the 135-residue chain is Photosystem II extrinsic protein U (135 aa).

A signal peptide spans 1 to 26 (MKNLVRLLAVIALIIGSFWGKVPAQA).

It belongs to the PsbU family. In terms of assembly, PSII is composed of 1 copy each of membrane proteins PsbA, PsbB, PsbC, PsbD, PsbE, PsbF, PsbH, PsbI, PsbJ, PsbK, PsbL, PsbM, PsbT, PsbX, PsbY, PsbZ, Psb30/Ycf12, peripheral proteins PsbO, CyanoQ (PsbQ), PsbU, PsbV and a large number of cofactors. It forms dimeric complexes.

The protein localises to the cellular thylakoid membrane. In terms of biological role, one of the extrinsic, lumenal subunits of photosystem II (PSII). PSII is a light-driven water plastoquinone oxidoreductase, using light energy to abstract electrons from H(2)O, generating a proton gradient subsequently used for ATP formation. The extrinsic proteins stabilize the structure of photosystem II oxygen-evolving complex (OEC), the ion environment of oxygen evolution and protect the OEC against heat-induced inactivation. The chain is Photosystem II extrinsic protein U from Microcystis aeruginosa (strain NIES-843 / IAM M-2473).